The chain runs to 616 residues: Zinc metalloproteinase-disintegrin-like ecarin (616 aa).

The signal sequence occupies residues 1–20 (MIQILLVIICLAVFPYQGCS). The propeptide occupies 21–190 (IILGSGNVND…EPIKKTLGLI (170 aa)). In terms of domain architecture, Peptidase M12B spans 201 to 397 (KFIELVVVVD…YNPKCILDPP (197 aa)). E204 contributes to the Ca(2+) binding site. N219 and N261 each carry an N-linked (GlcNAc...) asparagine glycan. D288 serves as a coordination point for Ca(2+). Residues N295 and N326 are each glycosylated (N-linked (GlcNAc...) asparagine). 3 cysteine pairs are disulfide-bonded: C312–C392, C352–C376, and C354–C359. H337 is a Zn(2+) binding site. The active site involves E338. Zn(2+)-binding residues include H341 and H347. C392, V407, N410, I412, E414, E417, and D420 together coordinate Ca(2+). One can recognise a Disintegrin domain in the interval 405-491 (PAVCGNEIWE…ECPRNEFQRN (87 aa)). Cystine bridges form between C408–C437, C419–C432, C421–C427, C431–C454, C445–C451, C450–C476, C463–C483, C470–C502, C495–C507, C514–C567, C529–C578, C542–C555, C562–C604, and C598–C609. The short motif at 469 to 471 (DCD) is the D/ECD-tripeptide element. Ca(2+) is bound by residues D471, V472, and N486. A glycan (N-linked (GlcNAc...) asparagine) is linked at N497.

The protein belongs to the venom metalloproteinase (M12B) family. P-III subfamily. P-IIIa sub-subfamily. As to quaternary structure, monomer. Requires Zn(2+) as cofactor. In terms of tissue distribution, expressed by the venom gland.

It is found in the secreted. Snake venom zinc metalloproteinase that catalyzes the conversion of prothrombin (F2) to alpha-thrombin through formation of a thrombin intermediate, thereby functioning as a procoagulant protein. Has a low Km for prothrombin and a high kcat. Cleaves the 320-Arg-Ile-321 bond in prothrombin and produces meizothrombin which is ultimately converted to alpha-thrombin by autolysis. In Echis carinatus (Saw-scaled viper), this protein is Zinc metalloproteinase-disintegrin-like ecarin.